Consider the following 465-residue polypeptide: Cysteine--tRNA ligase (465 aa).

Cysteine 27 contributes to the Zn(2+) binding site. The short motif at 29–39 (PTVYDDAHLGH) is the 'HIGH' region element. Residues 153–173 (DISHKVSDDDTQSRVEHNSEK) form a disordered region. Positions 208, 237, and 241 each coordinate Zn(2+). The 'KMSKS' region signature appears at 269 to 273 (KMSKS). Residue lysine 272 coordinates ATP.

Belongs to the class-I aminoacyl-tRNA synthetase family. In terms of assembly, monomer. Requires Zn(2+) as cofactor.

It is found in the cytoplasm. The catalysed reaction is tRNA(Cys) + L-cysteine + ATP = L-cysteinyl-tRNA(Cys) + AMP + diphosphate. The sequence is that of Cysteine--tRNA ligase from Sulfurovum sp. (strain NBC37-1).